Consider the following 173-residue polypeptide: Alpha-crystallin A chain (173 aa).

Position 1 is an N-acetylmethionine (Met-1). The segment at 1 to 63 (MDIAIQHPWF…RTVLDSGISE (63 aa)) is required for complex formation with BFSP1 and BFSP2. At Gln-6 the chain carries Deamidated glutamine; partial. The residue at position 45 (Ser-45) is a Phosphoserine. Gln-50 carries the deamidated glutamine; partial modification. The region spanning 52-162 (LFRTVLDSGI…GHSERAIPVS (111 aa)) is the sHSP domain. Lys-70 bears the N6-acetyllysine mark. Gln-90 bears the Deamidated glutamine; partial mark. Position 99 is an N6-acetyllysine (Lys-99). His-100 serves as a coordination point for Zn(2+). Asn-101 is modified (deamidated asparagine; partial). 2 residues coordinate Zn(2+): Glu-102 and His-107. Position 122 is a phosphoserine (Ser-122). Asn-123 bears the Deamidated asparagine; partial mark. Positions 144-173 (PKVPSGVDAGHSERAIPVSREEKPSSAPSS) are disordered. Residues 153 to 167 (GHSERAIPVSREEKP) are compositionally biased toward basic and acidic residues. His-154 provides a ligand contact to Zn(2+). O-linked (GlcNAc) serine glycosylation is present at Ser-162.

The protein belongs to the small heat shock protein (HSP20) family. As to quaternary structure, heteromer composed of three CRYAA and one CRYAB subunits. Inter-subunit bridging via zinc ions enhances stability, which is crucial as there is no protein turn over in the lens. Can also form homodimers and homotetramers (dimers of dimers) which serve as the building blocks of homooligomers. Within homooligomers, the zinc-binding motif is created from residues of 3 different molecules. His-100 and Glu-102 from one molecule are ligands of the zinc ion, and His-107 and His-154 residues from additional molecules complete the site with tetrahedral coordination geometry. Part of a complex required for lens intermediate filament formation composed of BFSP1, BFSP2 and CRYAA. In terms of processing, acetylation at Lys-70 may increase chaperone activity. Post-translationally, undergoes age-dependent proteolytical cleavage at the C-terminus.

It localises to the cytoplasm. The protein localises to the nucleus. Functionally, contributes to the transparency and refractive index of the lens. Acts as a chaperone, preventing aggregation of various proteins under a wide range of stress conditions. Required for the correct formation of lens intermediate filaments as part of a complex composed of BFSP1, BFSP2 and CRYAA. This Ovis aries (Sheep) protein is Alpha-crystallin A chain (CRYAA).